The sequence spans 87 residues: Small ribosomal subunit protein bS20 (87 aa).

The protein belongs to the bacterial ribosomal protein bS20 family.

Its function is as follows. Binds directly to 16S ribosomal RNA. The sequence is that of Small ribosomal subunit protein bS20 from Alkaliphilus oremlandii (strain OhILAs) (Clostridium oremlandii (strain OhILAs)).